Consider the following 116-residue polypeptide: MTFNKIFKYLISLLFLSILFHTIIHKNNLVFSKTMHKKVAFFSFSFFFVWIRHLKRYNSMLEKATFFVLQTSYTNELKGLYIAGNSYPYYQDKKKLVFNSFQKPFKNHQSTKIPRE.

Putative control of replication message. This chain is Protein cop (cop), found in Staphylococcus aureus.